The sequence spans 144 residues: Large-conductance mechanosensitive channel (144 aa).

2 consecutive transmembrane segments (helical) span residues 16–36 and 86–106; these read VIDL…VDSV and GNFL…FLMV.

The protein belongs to the MscL family. As to quaternary structure, homopentamer.

The protein resides in the cell inner membrane. Channel that opens in response to stretch forces in the membrane lipid bilayer. May participate in the regulation of osmotic pressure changes within the cell. The polypeptide is Large-conductance mechanosensitive channel (Cupriavidus pinatubonensis (strain JMP 134 / LMG 1197) (Cupriavidus necator (strain JMP 134))).